An 89-amino-acid chain; its full sequence is Putative regulatory protein BPUM_1466 (89 aa).

Belongs to the RemA family.

The sequence is that of Putative regulatory protein BPUM_1466 from Bacillus pumilus (strain SAFR-032).